The chain runs to 180 residues: Adenine phosphoribosyltransferase (180 aa).

It belongs to the purine/pyrimidine phosphoribosyltransferase family. As to quaternary structure, homodimer.

The protein resides in the cytoplasm. The catalysed reaction is AMP + diphosphate = 5-phospho-alpha-D-ribose 1-diphosphate + adenine. It functions in the pathway purine metabolism; AMP biosynthesis via salvage pathway; AMP from adenine: step 1/1. Functionally, catalyzes a salvage reaction resulting in the formation of AMP, that is energically less costly than de novo synthesis. This is Adenine phosphoribosyltransferase from Marinomonas sp. (strain MWYL1).